We begin with the raw amino-acid sequence, 74 residues long: ATP synthase subunit c (74 aa).

2 helical membrane passes run 8-28 (FIGA…VGNI) and 52-72 (IGFA…LMVL).

It belongs to the ATPase C chain family. F-type ATPases have 2 components, F(1) - the catalytic core - and F(0) - the membrane proton channel. F(1) has five subunits: alpha(3), beta(3), gamma(1), delta(1), epsilon(1). F(0) has three main subunits: a(1), b(2) and c(10-14). The alpha and beta chains form an alternating ring which encloses part of the gamma chain. F(1) is attached to F(0) by a central stalk formed by the gamma and epsilon chains, while a peripheral stalk is formed by the delta and b chains.

The protein localises to the cell inner membrane. In terms of biological role, f(1)F(0) ATP synthase produces ATP from ADP in the presence of a proton or sodium gradient. F-type ATPases consist of two structural domains, F(1) containing the extramembraneous catalytic core and F(0) containing the membrane proton channel, linked together by a central stalk and a peripheral stalk. During catalysis, ATP synthesis in the catalytic domain of F(1) is coupled via a rotary mechanism of the central stalk subunits to proton translocation. Functionally, key component of the F(0) channel; it plays a direct role in translocation across the membrane. A homomeric c-ring of between 10-14 subunits forms the central stalk rotor element with the F(1) delta and epsilon subunits. In Paramagnetospirillum magneticum (strain ATCC 700264 / AMB-1) (Magnetospirillum magneticum), this protein is ATP synthase subunit c.